The following is a 246-amino-acid chain: Transcription factor A, mitochondrial (246 aa).

A mitochondrion-targeting transit peptide spans 1-42; the sequence is MAFLRSMWGVLSALGRSGAELCTGCGSRLRSPFSFVYLPRWF. A DNA-binding region (HMG box 1) is located at residues 50-118; it reads PKKPVSSYLR…VYKEEISRFK (69 aa). 3 positions are modified to phosphoserine; by PKA: Ser55, Ser56, and Ser61. Thr122 is modified (phosphothreonine). Residues 155–219 constitute a DNA-binding region (HMG box 2); the sequence is PKRPRSAYNV…RYHNEMKSWE (65 aa). Phosphoserine; by PKA is present on Ser160. Phosphoserine occurs at positions 193 and 195.

As to quaternary structure, monomer; binds DNA as a monomer. Homodimer. Component of the mitochondrial transcription initiation complex, composed at least of TFB2M, TFAM and POLRMT. In this complex TFAM recruits POLRMT to the promoter whereas TFB2M induces structural changes in POLRMT to enable promoter opening and trapping of the DNA non-template strand. Upon metabolic stress, forms a complex composed of FOXO3, SIRT3, TFAM and POLRMT. Interacts with TFB1M and TFB2M. Interacts with CLPX; this enhances DNA-binding. Post-translationally, phosphorylation by PKA within the HMG box 1 impairs DNA binding and promotes degradation by the AAA+ Lon protease.

It is found in the mitochondrion. Its subcellular location is the mitochondrion matrix. It localises to the mitochondrion nucleoid. Its function is as follows. Binds to the mitochondrial light strand promoter and functions in mitochondrial transcription regulation. Component of the mitochondrial transcription initiation complex, composed at least of TFB2M, TFAM and POLRMT that is required for basal transcription of mitochondrial DNA. In this complex, TFAM recruits POLRMT to a specific promoter whereas TFB2M induces structural changes in POLRMT to enable promoter opening and trapping of the DNA non-template strand. Required for accurate and efficient promoter recognition by the mitochondrial RNA polymerase. Promotes transcription initiation from the HSP1 and the light strand promoter by binding immediately upstream of transcriptional start sites. Is able to unwind DNA. Bends the mitochondrial light strand promoter DNA into a U-turn shape via its HMG boxes. Required for maintenance of normal levels of mitochondrial DNA. May play a role in organizing and compacting mitochondrial DNA. This chain is Transcription factor A, mitochondrial, found in Homo sapiens (Human).